The following is a 373-amino-acid chain: Alanine racemase (373 aa).

Residue K35 is the Proton acceptor; specific for D-alanine of the active site. Residue K35 is modified to N6-(pyridoxal phosphate)lysine. R130 contacts substrate. The active-site Proton acceptor; specific for L-alanine is the Y253. Residue M305 participates in substrate binding.

The protein belongs to the alanine racemase family. Pyridoxal 5'-phosphate is required as a cofactor.

The enzyme catalyses L-alanine = D-alanine. It functions in the pathway amino-acid biosynthesis; D-alanine biosynthesis; D-alanine from L-alanine: step 1/1. Its function is as follows. Catalyzes the interconversion of L-alanine and D-alanine. May also act on other amino acids. The polypeptide is Alanine racemase (alr) (Cupriavidus necator (strain ATCC 17699 / DSM 428 / KCTC 22496 / NCIMB 10442 / H16 / Stanier 337) (Ralstonia eutropha)).